Consider the following 862-residue polypeptide: Cytosolic carboxypeptidase 2 (862 aa).

Residues 359–629 form the Peptidase M14 domain; that stretch reads YPYTYTDLQC…HVCDTLLDFC (271 aa). Zn(2+)-binding residues include His425, Glu428, and His521. Catalysis depends on Glu593, which acts as the Proton donor/acceptor. Disordered stretches follow at residues 669 to 692, 704 to 728, and 750 to 836; these read SDIP…DGPP, NQKT…EQYQ, and STLQ…PNWS. Residues 674–689 show a composition bias toward low complexity; that stretch reads SDIESSTSGSDSSLSD. The segment covering 711–721 has biased composition (basic residues); sequence NPKKKRLQTRK. The segment covering 813–825 has biased composition (polar residues); that stretch reads ASCSPKRSTNSSL.

It belongs to the peptidase M14 family. As to quaternary structure, interacts with RARRES1, KIF11 and MAPRE1. It depends on Zn(2+) as a cofactor. In terms of tissue distribution, widely expressed. Expressed in tissues with motile cilia such as testis, lung and trachea. Also detected in brain, eye, muscle, pancreas, intestine, stomach, pituitary, spleen, adrenal and kidney. Expressed in mitral and granular cells in brain.

The protein resides in the cytoplasm. The protein localises to the cytosol. It localises to the cytoskeleton. Its subcellular location is the microtubule organizing center. It is found in the centrosome. The protein resides in the centriole. The protein localises to the cilium basal body. The catalysed reaction is (L-glutamyl)(n+1)-gamma-L-glutamyl-L-glutamyl-[protein] + H2O = (L-glutamyl)(n)-gamma-L-glutamyl-L-glutamyl-[protein] + L-glutamate. With respect to regulation, inhibited by RARRES1. Its function is as follows. Metallocarboxypeptidase that mediates deglutamylation of tubulin and non-tubulin target proteins. Catalyzes the removal of polyglutamate side chains present on the gamma-carboxyl group of glutamate residues within the C-terminal tail of tubulin protein. Specifically cleaves tubulin long-side-chains, while it is not able to remove the branching point glutamate. Also catalyzes the removal of polyglutamate residues from the carboxy-terminus of non-tubulin proteins such as MYLK. In Mus musculus (Mouse), this protein is Cytosolic carboxypeptidase 2.